The chain runs to 892 residues: Protein argonaute 11 (892 aa).

A compositionally biased stretch (gly residues) spans 1 to 17 (MSSRGGGVGGRRGGPGG). 2 disordered regions span residues 1 to 68 (MSSR…ALQP) and 86 to 117 (MEAREGASSSSSASAPAVGEVEPPSRAVGALP). Low complexity predominate over residues 86 to 107 (MEAREGASSSSSASAPAVGEVE). The region spanning 248–362 (SLKQFLAGTY…LPMEVCRIVK (115 aa)) is the PAZ domain. The Piwi domain maps to 541-848 (LLVIVLPDAN…AASRARHYLE (308 aa)). The segment at 850-876 (GSLPDHGSSSASAAGGSRRNDRGVPVK) is disordered. Low complexity predominate over residues 856-866 (GSSSASAAGGS). Residues 867–876 (RRNDRGVPVK) are compositionally biased toward basic and acidic residues.

It belongs to the argonaute family. Ago subfamily.

Functionally, probably involved in the RNA silencing pathway. May bind to short RNAs such as microRNAs (miRNAs) or short interfering RNAs (siRNAs), and represses the translation of mRNAs which are complementary to them. This Oryza sativa subsp. japonica (Rice) protein is Protein argonaute 11 (AGO11).